We begin with the raw amino-acid sequence, 451 residues long: Glyceraldehyde-3-phosphate dehydrogenase B, chloroplastic (451 aa).

A chloroplast-targeting transit peptide spans 1–83; that stretch reads MASHAALAPS…AAPVRGETVA (83 aa). Residues 94–95, aspartate 118, and arginine 163 each bind NADP(+); that span reads RI. Residues 237-239, threonine 268, arginine 283, 296-297, and arginine 319 each bind D-glyceraldehyde 3-phosphate; these read SCT and TG. Catalysis depends on cysteine 238, which acts as the Nucleophile. Asparagine 402 is an NADP(+) binding site.

Belongs to the glyceraldehyde-3-phosphate dehydrogenase family. In terms of assembly, tetramer of either four A chains (GAPDH 2) or two A and two B chains (GAPDH 1).

The protein resides in the plastid. It is found in the chloroplast. The catalysed reaction is D-glyceraldehyde 3-phosphate + phosphate + NADP(+) = (2R)-3-phospho-glyceroyl phosphate + NADPH + H(+). Its pathway is carbohydrate biosynthesis; Calvin cycle. This chain is Glyceraldehyde-3-phosphate dehydrogenase B, chloroplastic (GAPB), found in Spinacia oleracea (Spinach).